Reading from the N-terminus, the 135-residue chain is MAPKAAEKKPVEKTPAVKKPKAEKKVPTSKEGGEKKGKKKSKKSMETYKIYIFKVLKQVHPDIGISSKAMSITNSFINDIFEKLAGESAKLARYNKKPTITSREIQTSVRLVLPGELAKHAVSEGTKAVTKFTSA.

Basic and acidic residues-rich tracts occupy residues 1–12 (MAPKAAEKKPVE) and 23–35 (EKKV…GGEK). The interval 1-43 (MAPKAAEKKPVEKTPAVKKPKAEKKVPTSKEGGEKKGKKKSKK) is disordered. An N6-acetyllysine mark is found at K8 and K24. Residue K131 forms a Glycyl lysine isopeptide (Lys-Gly) (interchain with G-Cter in ubiquitin) linkage.

It belongs to the histone H2B family. In terms of assembly, the nucleosome is a histone octamer containing two molecules each of H2A, H2B, H3 and H4 assembled in one H3-H4 heterotetramer and two H2A-H2B heterodimers. The octamer wraps approximately 147 bp of DNA. Post-translationally, can be acetylated to form H2BK6ac and H2BK33ac. In terms of processing, monoubiquitinated to form H2BK143ub1; may give a specific tag for epigenetic transcriptional activation. As to expression, expressed preferentially in meristematic tissues.

It localises to the nucleus. Its subcellular location is the chromosome. In terms of biological role, core component of nucleosome. Nucleosomes wrap and compact DNA into chromatin, limiting DNA accessibility to the cellular machineries which require DNA as a template. Histones thereby play a central role in transcription regulation, DNA repair, DNA replication and chromosomal stability. DNA accessibility is regulated via a complex set of post-translational modifications of histones, also called histone code, and nucleosome remodeling. The chain is Histone H2B.4 (TH153) from Triticum aestivum (Wheat).